Here is a 274-residue protein sequence, read N- to C-terminus: Undecaprenyl-diphosphatase (274 aa).

8 helical membrane-spanning segments follow: residues 9–29 (LEYL…FIPV), 47–67 (PGAS…AWYF), 95–115 (ILIG…FVPY), 120–140 (VLRS…FMYL), 161–181 (LIGF…GITI), 197–217 (FSFL…FISS), 224–244 (LGFF…LLAI), and 254–274 (NGLK…LLNL).

The protein belongs to the UppP family.

It localises to the cell inner membrane. It catalyses the reaction di-trans,octa-cis-undecaprenyl diphosphate + H2O = di-trans,octa-cis-undecaprenyl phosphate + phosphate + H(+). In terms of biological role, catalyzes the dephosphorylation of undecaprenyl diphosphate (UPP). Confers resistance to bacitracin. This Prochlorococcus marinus (strain AS9601) protein is Undecaprenyl-diphosphatase.